Reading from the N-terminus, the 406-residue chain is Elongation factor Tu-A (406 aa).

In terms of domain architecture, tr-type G spans 10 to 215 (KPHVNVGTIG…AIDEYIPTPV (206 aa)). Positions 19–26 (GHVDHGKT) are G1. Position 19-26 (19-26 (GHVDHGKT)) interacts with GTP. Mg(2+) is bound at residue T26. A G2 region spans residues 61 to 65 (GITIN). Positions 82 to 85 (DCPG) are G3. GTP-binding positions include 82–86 (DCPGH) and 137–140 (NKVD). Residues 137-140 (NKVD) are G4. Residues 175–177 (SAL) form a G5 region. T395 bears the Phosphothreonine mark.

The protein belongs to the TRAFAC class translation factor GTPase superfamily. Classic translation factor GTPase family. EF-Tu/EF-1A subfamily. As to quaternary structure, monomer. Binds to the 70S ribosome, contacts tmRNA during trans-translation. Phosphorylated on a threonine.

Its subcellular location is the cytoplasm. It carries out the reaction GTP + H2O = GDP + phosphate + H(+). In terms of biological role, GTP hydrolase that promotes the GTP-dependent binding of aminoacyl-tRNA to the A-site of ribosomes during protein biosynthesis. Its function is as follows. EF-Tu-GDP binds to the acceptor arm of tmRNA by interacting with its acceptor arm, suggesting that GTP hydrolysis by EF-Tu is essential for tmRNA function. Protects glycyl-tRNA(Gly) from hydrolysis by E.coli D-aminoacyl-tRNA deacylase (dtd). The polypeptide is Elongation factor Tu-A (Thermus thermophilus (strain ATCC 27634 / DSM 579 / HB8)).